Consider the following 376-residue polypeptide: 26S proteasome non-ATPase regulatory subunit 13 (376 aa).

The PCI domain maps to 171-338 (SYYKDALRFL…KRVHMTWVQP (168 aa)). Lys298 is subject to N6-acetyllysine.

Belongs to the proteasome subunit S11 family. As to quaternary structure, component of the 19S proteasome regulatory particle complex. The 26S proteasome consists of a 20S core particle (CP) and two 19S regulatory subunits (RP). The regulatory particle is made of a lid composed of 9 subunits including PSMD13, a base containing 6 ATPases and few additional components.

Functionally, component of the 26S proteasome, a multiprotein complex involved in the ATP-dependent degradation of ubiquitinated proteins. This complex plays a key role in the maintenance of protein homeostasis by removing misfolded or damaged proteins, which could impair cellular functions, and by removing proteins whose functions are no longer required. Therefore, the proteasome participates in numerous cellular processes, including cell cycle progression, apoptosis, or DNA damage repair. The chain is 26S proteasome non-ATPase regulatory subunit 13 (Psmd13) from Mus musculus (Mouse).